The chain runs to 177 residues: Peptide deformylase (177 aa).

Positions 98 and 140 each coordinate Fe cation. Residue Glu-141 is part of the active site. His-144 contacts Fe cation.

It belongs to the polypeptide deformylase family. Fe(2+) is required as a cofactor.

The enzyme catalyses N-terminal N-formyl-L-methionyl-[peptide] + H2O = N-terminal L-methionyl-[peptide] + formate. Functionally, removes the formyl group from the N-terminal Met of newly synthesized proteins. Requires at least a dipeptide for an efficient rate of reaction. N-terminal L-methionine is a prerequisite for activity but the enzyme has broad specificity at other positions. This chain is Peptide deformylase, found in Zymomonas mobilis subsp. mobilis (strain ATCC 31821 / ZM4 / CP4).